A 640-amino-acid chain; its full sequence is uncharacterized protein (640 aa).

The region spanning 184–328 (VKRDTIFIIK…KVQRSIDTMI (145 aa)) is the TIR domain. Positions 613–640 (LPNDLDDEDEELDDSTLGRPDSDEEGGE) are disordered. Residues 616–626 (DLDDEDEELDD) are compositionally biased toward acidic residues.

This is an uncharacterized protein from Sinorhizobium fredii (strain NBRC 101917 / NGR234).